A 138-amino-acid polypeptide reads, in one-letter code: Small ribosomal subunit protein uS11c (138 aa).

Residues 1 to 21 are disordered; the sequence is MAKSIPKIGSRKTGRIGSRKH. Basic residues predominate over residues 9-21; sequence GSRKTGRIGSRKH.

This sequence belongs to the universal ribosomal protein uS11 family. In terms of assembly, part of the 30S ribosomal subunit.

Its subcellular location is the plastid. It is found in the chloroplast. In Pisum sativum (Garden pea), this protein is Small ribosomal subunit protein uS11c.